The chain runs to 474 residues: MSYPQGYLYQAPGSLALYSCPAYGASALAAPRSEELARSASGSAFSPYPGSAAFTAQAATGFGSPLQYSADAAAAAAAGFPSYVGSPYDTHTTGMTGAISYHPYGSAAYPYQLNDPAYRKNATRDATATLKAWLNEHRKNPYPTKGEKIMLAIITKMTLTQVSTWFANARRRLKKENKMTWAPRNKSEDEDEDEGDASRSKEESSDKAQDGTETSAEDEGISLHVDSLTDHSCSAESDGEKLPCRAGDALCESGSECKDKFEDLEDEEDEEDECERDLAPPKPVTSSPLTGVEAPLLSPAPEAAPRGGSGGKTPLGSRTSPGAPPPASKPKLWSLAEIATSDLKQPSLGPGCGPPGLPAAAAPASTGAPPGGSPYSASPLLGRHLYYTSPFYGNYTNYGNLNAALQGQGLLRYNTAASSPGETLHAMPKAASDTGKAGSHSLESHYRPPGGGYEPKKDTSEGCAVVGAGVQTYL.

Residues 115-177 constitute a DNA-binding region (homeobox; TALE-type); it reads DPAYRKNATR…NARRRLKKEN (63 aa). Disordered regions lie at residues 177–220, 262–373, and 420–461; these read NKMT…EDEG, EDLE…PGGS, and PGET…DTSE. Position 187 is a phosphoserine (S187). Basic and acidic residues predominate over residues 196-210; the sequence is DASRSKEESSDKAQD. Positions 262-275 are enriched in acidic residues; sequence EDLEDEEDEEDECE. Composition is skewed to low complexity over residues 293 to 305 and 358 to 373; these read EAPL…EAAP and PAAA…PGGS.

This sequence belongs to the TALE/IRO homeobox family. In terms of tissue distribution, expressed in specific and overlapping patterns with Irx1 and Irx3 in the developing and adult metanephric kidney. In the adult metanephros, renal expression is found in the loop of Henle in the S3 proximal tubule segment and in the thick ascending limb (TAL) of the distal tubule.

The protein resides in the nucleus. The polypeptide is Iroquois-class homeodomain protein IRX-2 (Irx2) (Mus musculus (Mouse)).